Here is a 717-residue protein sequence, read N- to C-terminus: Polyribonucleotide nucleotidyltransferase (717 aa).

Mg(2+) contacts are provided by Asp-486 and Asp-492. Residues 553 to 612 (PRMITVKINPEKIRDVIGKGGSTIQALTKETGCTIDIQEDGTITIASTSSEGMAEAKRRI) form the KH domain. Positions 622 to 690 (GKIYSGTVLK…EKGRMRLSIK (69 aa)) constitute an S1 motif domain. Residues 690–717 (KAAKAEEGDVPATAPQAPGAGDATSQQQ) are disordered.

It belongs to the polyribonucleotide nucleotidyltransferase family. The cofactor is Mg(2+).

It is found in the cytoplasm. It catalyses the reaction RNA(n+1) + phosphate = RNA(n) + a ribonucleoside 5'-diphosphate. Involved in mRNA degradation. Catalyzes the phosphorolysis of single-stranded polyribonucleotides processively in the 3'- to 5'-direction. The sequence is that of Polyribonucleotide nucleotidyltransferase from Ralstonia nicotianae (strain ATCC BAA-1114 / GMI1000) (Ralstonia solanacearum).